We begin with the raw amino-acid sequence, 761 residues long: Phosphoribosylformylglycinamidine synthase subunit PurL (761 aa).

H48 is a catalytic residue. Y51 and K90 together coordinate ATP. E92 lines the Mg(2+) pocket. Residues 93 to 96 (SHNH) and R115 contribute to the substrate site. H94 serves as the catalytic Proton acceptor. Mg(2+) is bound at residue D116. Q239 contributes to the substrate binding site. Position 267 (D267) interacts with Mg(2+). 311–313 (ESQ) contacts substrate. Positions 499 and 536 each coordinate ATP. Residue N537 participates in Mg(2+) binding. S539 serves as a coordination point for substrate.

It belongs to the FGAMS family. As to quaternary structure, monomer. Part of the FGAM synthase complex composed of 1 PurL, 1 PurQ and 2 PurS subunits.

The protein resides in the cytoplasm. The catalysed reaction is N(2)-formyl-N(1)-(5-phospho-beta-D-ribosyl)glycinamide + L-glutamine + ATP + H2O = 2-formamido-N(1)-(5-O-phospho-beta-D-ribosyl)acetamidine + L-glutamate + ADP + phosphate + H(+). The protein operates within purine metabolism; IMP biosynthesis via de novo pathway; 5-amino-1-(5-phospho-D-ribosyl)imidazole from N(2)-formyl-N(1)-(5-phospho-D-ribosyl)glycinamide: step 1/2. In terms of biological role, part of the phosphoribosylformylglycinamidine synthase complex involved in the purines biosynthetic pathway. Catalyzes the ATP-dependent conversion of formylglycinamide ribonucleotide (FGAR) and glutamine to yield formylglycinamidine ribonucleotide (FGAM) and glutamate. The FGAM synthase complex is composed of three subunits. PurQ produces an ammonia molecule by converting glutamine to glutamate. PurL transfers the ammonia molecule to FGAR to form FGAM in an ATP-dependent manner. PurS interacts with PurQ and PurL and is thought to assist in the transfer of the ammonia molecule from PurQ to PurL. This is Phosphoribosylformylglycinamidine synthase subunit PurL from Thermosynechococcus vestitus (strain NIES-2133 / IAM M-273 / BP-1).